The primary structure comprises 374 residues: Glycerophosphodiester phosphodiesterase GDPD2 (374 aa).

Positions 38–326 (FSVIGHRGIG…DFVEEIIEST (289 aa)) constitute a GP-PDE domain. The tract at residues 330-349 (MIRPPPSSSPLPSPSKDDDV) is disordered. Over residues 332–342 (RPPPSSSPLPS) the composition is skewed to pro residues.

The protein belongs to the glycerophosphoryl diester phosphodiesterase family. In terms of tissue distribution, expressed in roots, shoots, flowers and siliques.

It carries out the reaction a sn-glycero-3-phosphodiester + H2O = an alcohol + sn-glycerol 3-phosphate + H(+). This is Glycerophosphodiester phosphodiesterase GDPD2 from Arabidopsis thaliana (Mouse-ear cress).